A 183-amino-acid polypeptide reads, in one-letter code: Hypoxanthine/guanine phosphoribosyltransferase (183 aa).

This sequence belongs to the purine/pyrimidine phosphoribosyltransferase family. Archaeal HPRT subfamily. Homodimer.

It localises to the cytoplasm. It catalyses the reaction IMP + diphosphate = hypoxanthine + 5-phospho-alpha-D-ribose 1-diphosphate. It carries out the reaction GMP + diphosphate = guanine + 5-phospho-alpha-D-ribose 1-diphosphate. It participates in purine metabolism; IMP biosynthesis via salvage pathway; IMP from hypoxanthine: step 1/1. Its function is as follows. Catalyzes a salvage reaction resulting in the formation of IMP that is energically less costly than de novo synthesis. This Methanocaldococcus vulcanius (strain ATCC 700851 / DSM 12094 / M7) (Methanococcus vulcanius) protein is Hypoxanthine/guanine phosphoribosyltransferase.